The primary structure comprises 355 residues: Probable butyrate kinase (355 aa).

It belongs to the acetokinase family.

Its subcellular location is the cytoplasm. The enzyme catalyses butanoate + ATP = butanoyl phosphate + ADP. The polypeptide is Probable butyrate kinase (Clostridium botulinum (strain Eklund 17B / Type B)).